A 291-amino-acid polypeptide reads, in one-letter code: Presqualene diphosphate synthase (291 aa).

Residues 1–23 (MTSAMKKIQPEAFSEKSSDSQAS) are disordered.

Belongs to the phytoene/squalene synthase family. HpnD subfamily.

It catalyses the reaction 2 (2E,6E)-farnesyl diphosphate = presqualene diphosphate + diphosphate. The protein operates within secondary metabolite biosynthesis; hopanoid biosynthesis. Its function is as follows. Involved in the biosynthesis of the hopanoid precursor squalene (SQ) from farnesyl diphosphate (FPP). Catalyzes the first step, the formation of presqualene diphosphate (PSPP) from two molecules of FPP. This Zymomonas mobilis subsp. mobilis (strain ATCC 31821 / ZM4 / CP4) protein is Presqualene diphosphate synthase.